A 603-amino-acid chain; its full sequence is NADH-ubiquinone oxidoreductase chain 5 (603 aa).

Helical transmembrane passes span 4–24, 36–56, 87–107, 114–134, 137–157, 171–191, 200–220, 241–261, 272–292, 301–320, 325–347, 366–386, 407–429, 457–477, 482–502, and 583–603; these read YTTMAILTLTSLIPPITATLI, VKMTIASTFMISLFPTMMFMC, MMFIPIALFVTWSIMEFSLWY, INQFFKYLLIFLTTMLILVTA, LFQLFIGWEGVGIMSFLLIGW, AILYNRIGDIGFILALAWFLL, QMILLNSNPNFLPLAGLLLAA, TPVSALLHSSTMVVAGVFLLI, LIQTLTLCLGAITTLFTAICA, IVAFSTSSQLGLMVVTIGIN, AFLHICTHAFFKAMLFMCSGSII, LPLTSTSLTIGSLALTGMPFL, WALSTTLIATSLTSAYSTRMILL, LTIGSLLAGFLIINSIPPTSP, IPLYLKLTALSITLLGFLTAF, and MIKLYSLSLLIPLSLTLLLIM.

This sequence belongs to the complex I subunit 5 family. Core subunit of respiratory chain NADH dehydrogenase (Complex I) which is composed of 45 different subunits.

The protein localises to the mitochondrion inner membrane. It catalyses the reaction a ubiquinone + NADH + 5 H(+)(in) = a ubiquinol + NAD(+) + 4 H(+)(out). Its function is as follows. Core subunit of the mitochondrial membrane respiratory chain NADH dehydrogenase (Complex I) which catalyzes electron transfer from NADH through the respiratory chain, using ubiquinone as an electron acceptor. Essential for the catalytic activity and assembly of complex I. The sequence is that of NADH-ubiquinone oxidoreductase chain 5 (MT-ND5) from Hylobates lar (Lar gibbon).